The chain runs to 233 residues: Probable septum site-determining protein MinC (233 aa).

The tract at residues 104–124 (QKMATPEPAPAPAPVVDPNAP) is disordered.

This sequence belongs to the MinC family. In terms of assembly, interacts with MinD and FtsZ.

Its function is as follows. Cell division inhibitor that blocks the formation of polar Z ring septums. Rapidly oscillates between the poles of the cell to destabilize FtsZ filaments that have formed before they mature into polar Z rings. Prevents FtsZ polymerization. The chain is Probable septum site-determining protein MinC from Serratia proteamaculans (strain 568).